The sequence spans 462 residues: Probable acid phosphatase SPBC4.06 (462 aa).

Catalysis depends on H35, which acts as the Nucleophile. The active-site Proton donor is D330.

The protein belongs to the histidine acid phosphatase family.

Its subcellular location is the mitochondrion. It catalyses the reaction a phosphate monoester + H2O = an alcohol + phosphate. The sequence is that of Probable acid phosphatase SPBC4.06 from Schizosaccharomyces pombe (strain 972 / ATCC 24843) (Fission yeast).